A 229-amino-acid chain; its full sequence is Urease accessory protein UreF (229 aa).

This sequence belongs to the UreF family. In terms of assembly, ureD, UreF and UreG form a complex that acts as a GTP-hydrolysis-dependent molecular chaperone, activating the urease apoprotein by helping to assemble the nickel containing metallocenter of UreC. The UreE protein probably delivers the nickel.

The protein localises to the cytoplasm. In terms of biological role, required for maturation of urease via the functional incorporation of the urease nickel metallocenter. This chain is Urease accessory protein UreF, found in Methylobacterium radiotolerans (strain ATCC 27329 / DSM 1819 / JCM 2831 / NBRC 15690 / NCIMB 10815 / 0-1).